Reading from the N-terminus, the 170-residue chain is Bifunctional protein PyrR (170 aa).

Positions 90-102 match the PRPP-binding motif; it reads LVLIDDVLMSGRT.

Belongs to the purine/pyrimidine phosphoribosyltransferase family. PyrR subfamily.

It carries out the reaction UMP + diphosphate = 5-phospho-alpha-D-ribose 1-diphosphate + uracil. Its function is as follows. Regulates the transcription of the pyrimidine nucleotide (pyr) operon in response to exogenous pyrimidines. In terms of biological role, also displays a weak uracil phosphoribosyltransferase activity which is not physiologically significant. In Pseudomonas syringae pv. tomato (strain ATCC BAA-871 / DC3000), this protein is Bifunctional protein PyrR.